The following is a 174-amino-acid chain: MQTQKGGRPTILPKMYEEPLFSQIIDKIESGCNDREIYTSLHCSAKTFRKWRDDNIKAYDEAKSIARGNLLELAESALASKLTVRTLKETETIYDADGNVEKVKVKEKELDKDSLVAMMVAKAGNPELYNPTEWRRLQQEESSAHDLKAKIEELDDYKLSKYKTPEIEVPEGFE.

The protein belongs to the skunalikevirus terminase small subunit family.

Probable terminase small subunit. The terminase lies at a unique vertex of the procapsid and is composed of two subunits, a small terminase subunit and a large terminase subunit. Both terminase subunits heterooligomerize and are docked on the portal protein to form the packaging machine. Once the capsid is packaged with the DNA, the terminase complex is substituted by the connector proteins gp15. The chain is Terminase small subunit from Lactococcus phage p2 (Lactococcus lactis bacteriophage p2).